Reading from the N-terminus, the 37-residue chain is MQDLEIFLSIFAFIFVFYFGAHRTVMNRNKSDVPYLQ.

Residues 1-21 (MQDLEIFLSIFAFIFVFYFGA) traverse the membrane as a helical segment.

It is found in the endoplasmic reticulum membrane. This is an uncharacterized protein from Saccharomyces cerevisiae (strain ATCC 204508 / S288c) (Baker's yeast).